The primary structure comprises 228 residues: UPF0758 protein CLD_1541 (228 aa).

The region spanning Lys106–Ile228 is the MPN domain. Residues His177, His179, and Asp190 each contribute to the Zn(2+) site. A JAMM motif motif is present at residues His177–Asp190.

It belongs to the UPF0758 family.

The chain is UPF0758 protein CLD_1541 from Clostridium botulinum (strain Okra / Type B1).